We begin with the raw amino-acid sequence, 298 residues long: 2-dehydropantoate 2-reductase (298 aa).

Residues 7–12 (GGGSVG), Asn-98, and Ala-124 each bind NADP(+). Asn-98 serves as a coordination point for substrate. Residue Lys-179 is the Proton donor of the active site. Positions 183, 187, 197, and 246 each coordinate substrate. Glu-258 contacts NADP(+).

Belongs to the ketopantoate reductase family.

The protein resides in the cytoplasm. The catalysed reaction is (R)-pantoate + NADP(+) = 2-dehydropantoate + NADPH + H(+). It functions in the pathway cofactor biosynthesis; (R)-pantothenate biosynthesis; (R)-pantoate from 3-methyl-2-oxobutanoate: step 2/2. Catalyzes the NADPH-dependent reduction of ketopantoate into pantoic acid. The protein is 2-dehydropantoate 2-reductase (panE) of Bacillus subtilis (strain 168).